The primary structure comprises 565 residues: Arginine--tRNA ligase (565 aa).

The short motif at 121–131 is the 'HIGH' region element; it reads PNIAKPMGMGH.

This sequence belongs to the class-I aminoacyl-tRNA synthetase family. In terms of assembly, monomer.

It is found in the cytoplasm. The catalysed reaction is tRNA(Arg) + L-arginine + ATP = L-arginyl-tRNA(Arg) + AMP + diphosphate. This chain is Arginine--tRNA ligase, found in Lactobacillus delbrueckii subsp. bulgaricus (strain ATCC BAA-365 / Lb-18).